A 755-amino-acid polypeptide reads, in one-letter code: 1,4-alpha-glucan branching enzyme GlgB (755 aa).

Asp435 acts as the Nucleophile in catalysis. Catalysis depends on Glu488, which acts as the Proton donor.

This sequence belongs to the glycosyl hydrolase 13 family. GlgB subfamily. In terms of assembly, monomer.

It carries out the reaction Transfers a segment of a (1-&gt;4)-alpha-D-glucan chain to a primary hydroxy group in a similar glucan chain.. Its pathway is glycan biosynthesis; glycogen biosynthesis. In terms of biological role, catalyzes the formation of the alpha-1,6-glucosidic linkages in glycogen by scission of a 1,4-alpha-linked oligosaccharide from growing alpha-1,4-glucan chains and the subsequent attachment of the oligosaccharide to the alpha-1,6 position. In Vibrio parahaemolyticus serotype O3:K6 (strain RIMD 2210633), this protein is 1,4-alpha-glucan branching enzyme GlgB.